We begin with the raw amino-acid sequence, 153 residues long: SsrA-binding protein (153 aa).

Belongs to the SmpB family.

The protein localises to the cytoplasm. Required for rescue of stalled ribosomes mediated by trans-translation. Binds to transfer-messenger RNA (tmRNA), required for stable association of tmRNA with ribosomes. tmRNA and SmpB together mimic tRNA shape, replacing the anticodon stem-loop with SmpB. tmRNA is encoded by the ssrA gene; the 2 termini fold to resemble tRNA(Ala) and it encodes a 'tag peptide', a short internal open reading frame. During trans-translation Ala-aminoacylated tmRNA acts like a tRNA, entering the A-site of stalled ribosomes, displacing the stalled mRNA. The ribosome then switches to translate the ORF on the tmRNA; the nascent peptide is terminated with the 'tag peptide' encoded by the tmRNA and targeted for degradation. The ribosome is freed to recommence translation, which seems to be the essential function of trans-translation. The sequence is that of SsrA-binding protein from Paramagnetospirillum magneticum (strain ATCC 700264 / AMB-1) (Magnetospirillum magneticum).